The following is a 323-amino-acid chain: Sodium/potassium-transporting ATPase subunit beta-2 (323 aa).

Over 1–50 (MPTITEDCIDGFQQYYSRPPERPKKKSLKQMVYDSEDNSYFGRSMDSWAK) the chain is Cytoplasmic. A helical; Signal-anchor for type II membrane protein transmembrane segment spans residues 51-71 (IGIFYVAFYGVLAALVAICMW). Residues 72–323 (AFFQTLDPRI…GSVHYELLID (252 aa)) are Extracellular-facing. Cystine bridges form between Cys153–Cys165 and Cys175–Cys189. Residues Asn180 and Asn206 are each glycosylated (N-linked (GlcNAc...) asparagine). Cys241 and Cys298 form a disulfide bridge.

Belongs to the X(+)/potassium ATPases subunit beta family. In terms of assembly, the sodium/potassium-transporting ATPase is composed of a catalytic alpha subunit, an auxiliary non-catalytic beta subunit and an additional regulatory subunit. As to expression, in embryos, it is expressed in the neurons of the CNS and PNS, in Garland cells and posterior spiracles. In adults, it shows a nervous system specific distribution: optic lobes, brain, thoracic ganglia and axonal pathways in the leg. Both isoforms concentrate in the adult head, isoform 2.2 being predominant. Both isoforms are weakly expressed in the thorax and very poorly expressed in the abdomen.

The protein localises to the cell membrane. Functionally, this is the non-catalytic component of the active enzyme, which catalyzes the hydrolysis of ATP coupled with the exchange of Na(+) and K(+) ions across the plasma membrane. The beta subunit regulates, through assembly of alpha/beta heterodimers, the number of sodium pumps transported to the plasma membrane. The protein is Sodium/potassium-transporting ATPase subunit beta-2 (nrv2) of Drosophila melanogaster (Fruit fly).